We begin with the raw amino-acid sequence, 322 residues long: Pantothenate kinase (322 aa).

100–107 lines the ATP pocket; it reads GSVAVGKS.

It belongs to the prokaryotic pantothenate kinase family.

The protein localises to the cytoplasm. The enzyme catalyses (R)-pantothenate + ATP = (R)-4'-phosphopantothenate + ADP + H(+). The protein operates within cofactor biosynthesis; coenzyme A biosynthesis; CoA from (R)-pantothenate: step 1/5. The chain is Pantothenate kinase from Brucella abortus (strain 2308).